The primary structure comprises 420 residues: Glutamyl-tRNA reductase (420 aa).

Residues Thr-49 to Arg-52, Ser-109, Glu-114 to Gln-116, and Gln-120 contribute to the substrate site. The Nucleophile role is filled by Cys-50. Position 189–194 (Gly-189–Ile-194) interacts with NADP(+).

It belongs to the glutamyl-tRNA reductase family. As to quaternary structure, homodimer.

The catalysed reaction is (S)-4-amino-5-oxopentanoate + tRNA(Glu) + NADP(+) = L-glutamyl-tRNA(Glu) + NADPH + H(+). The protein operates within porphyrin-containing compound metabolism; protoporphyrin-IX biosynthesis; 5-aminolevulinate from L-glutamyl-tRNA(Glu): step 1/2. Its function is as follows. Catalyzes the NADPH-dependent reduction of glutamyl-tRNA(Glu) to glutamate 1-semialdehyde (GSA). This Sodalis glossinidius (strain morsitans) protein is Glutamyl-tRNA reductase.